Consider the following 798-residue polypeptide: MSFDPNLLHNNGHNGYPNGTSAALRETGVIEKLLTSYGFIQCSERQARLFFHCSQYNGNLQDLKVGDDVEFEVSSDRRTGKPIAIKLVKIKPEIHPEERMNGQVVCAVPHNLESKSPAAPGQSPTGSVCYERNGEVFYLTYTSEDVEGNVQLETGDKINFVIDNNKHTGAVSARNIMLLKKKQARCQGVVCAMKEAFGFIERGDVVKEIFFHYSEFKGDLETLQPGDDVEFTIKDRNGKEVATDVRLLPQGTVIFEDISIEHFEGTVTKVIPKVPSKNQNDPLPGRIKVDFVIPKELPFGDKDTKSKVTLLEGDHVRFNISTDRRDKLERATNIEVLSNTFQFTNEAREMGVIAAMRDGFGFIKCVDRDARMFFHFSEILDGNQLHIADEVEFTVVPDMLSAQRNHAIRIKKLPKGTVSFHSHSDHRFLGTVEKEATFSNPKTTSPNKGKDKEAEDGIIAYDDCGVKLTIAFQAKDVEGSTSPQIGDKVEFSISDKQRPGQQIATCVRLLGRNSNSKRLLGYVATLKDNFGFIETANHDKEIFFHYSEFSGDVDSLELGDMVEYSLSKGKGNKVSAEKVNKAHSVNGITEEANPTIYSGKVIRPLRGVDPTQIEYQGMIEIVEEGDMKGEVYPFGIVGMANKGDCLQKGESVKFQLCVLGQNAQTMAYNITPLRRATVECVKDQFGFINYEVGDSKKLFFHVKEVQDGVELQAGDEVEFSVILNQRTGKCSACNVWRVCEGPKAVAAPRPDRLVNRLKNITLDDASAPRLMVLRQPRGPDNSMGFGAERKIRQAGVID.

In terms of domain architecture, CSD 1 spans 26–87 (ETGVIEKLLT…RTGKPIAIKL (62 aa)). N6-acetyllysine is present on Lys81. A Glycyl lysine isopeptide (Lys-Gly) (interchain with G-Cter in SUMO2) cross-link involves residue Lys91. At Ser123 the chain carries Phosphoserine. The 44-residue stretch at 136–179 (VFYLTYTSEDVEGNVQLETGDKINFVIDNNKHTGAVSARNIMLL) folds into the CSD 2; truncated domain. Residues 186 to 245 (CQGVVCAMKEAFGFIERGDVVKEIFFHYSEFKGDLETLQPGDDVEFTIKDRNGKEVATDV) form the CSD 3 domain. Position 276 is a phosphoserine (Ser276). The CSD 4; truncated domain occupies 297–337 (LPFGDKDTKSKVTLLEGDHVRFNISTDRRDKLERATNIEVL). CSD domains are found at residues 349–410 (EMGV…AIRI) and 447–507 (NKGK…ATCV). A Phosphoserine modification is found at Ser514. Residues 519–579 (LLGYVATLKD…KGNKVSAEKV (61 aa)) enclose the CSD 7 domain. The residue at position 584 (Ser584) is a Phosphoserine. CSD domains follow at residues 610-670 (PTQI…AYNI) and 674-735 (RRAT…ACNV). Residues 748–789 (PRPDRLVNRLKNITLDDASAPRLMVLRQPRGPDNSMGFGAER) form the SUZ-C domain. The residue at position 761 (Thr761) is a Phosphothreonine.

Belongs to the UNR family. In terms of assembly, component of a multi subunit autoregulatory ribonucleoprotein complex (ARC), at least composed of IGF2BP1, PABPC1 and CSDE1. Interacts with STRAP. Part of a complex associated with the FOS mCRD domain and consisting of PABPC1, PAIP1, HNRPD and SYNCRIP. The interaction with PABPC1 is direct and RNA-independent. Interacts with EIF4ENIF1/4E-T.

Its subcellular location is the cytoplasm. It is found in the stress granule. The protein resides in the P-body. Its function is as follows. RNA-binding protein involved in translationally coupled mRNA turnover. Implicated with other RNA-binding proteins in the cytoplasmic deadenylation/translational and decay interplay of the FOS mRNA mediated by the major coding-region determinant of instability (mCRD) domain. Required for efficient formation of stress granules. The protein is Cold shock domain-containing protein E1 of Mus musculus (Mouse).